Consider the following 260-residue polypeptide: Nuclear receptor subfamily 0 group B member 2 (260 aa).

An NR LBD domain is found at 16 to 260 (SHPTILYTLL…ELLEDMLLLR (245 aa)). Arginine 57 is subject to Symmetric dimethylarginine; by PRMT5.

This sequence belongs to the nuclear hormone receptor family. NR0 subfamily. As to quaternary structure, heterodimer; efficient DNA binding requires dimerization with another bHLH protein. Interacts (via N-terminus) with NEUROD1 (via N-terminus and C-terminus). Interacts with ID2. Interacts with NR1I3 and EID1. Interacts with RARA, RXRA, THRB, NR5A1, NR5A2, PPARA and PPARG. Interacts with RORG, NFIL3, NR1D1 and BHLHE41. Interacts with HNF4A; the resulting heterodimer is transcriptionally inactive. Interacts with DDX3X; this interaction disrupts the interaction between HNF4 and NR0B2/SHP that forms inactive heterodimers and enhances the formation of active HNF4 homodimers. In terms of processing, arginine methylation by PRMT5 enhances repression activity of metabolic genes in liver in response to bile acid signaling, by increasing interaction with cofactors. In terms of tissue distribution, detected in kidney, testis, heart and liver.

It is found in the cytoplasm. The protein localises to the nucleus. Its function is as follows. Transcriptional regulator that acts as a negative regulator of receptor-dependent signaling pathways. Specifically inhibits transactivation of the nuclear receptor with which it interacts. Inhibits transcriptional activity of NEUROD1 on E-box-containing promoter by interfering with the coactivation function of the p300/CBP-mediated transcription complex for NEUROD1. Essential component of the liver circadian clock which via its interaction with NR1D1 and RORG regulates NPAS2-mediated hepatic lipid metabolism. Regulates the circadian expression of cytochrome P450 (CYP) enzymes. Represses: NR5A2 and HNF4A to down-regulate CYP2C38, NFLI3 to up-regulate CYP2A5, BHLHE41/HNF1A axis to up-regulate CYP1A2, CYP2E1 and CYP3A11, and NR1D1 to up-regulate CYP2B10, CYP4A10 and CYP4A14. This Rattus norvegicus (Rat) protein is Nuclear receptor subfamily 0 group B member 2 (Nr0b2).